Consider the following 266-residue polypeptide: Energy-coupling factor transporter ATP-binding protein EcfA2 (266 aa).

Positions 3–238 constitute an ABC transporter domain; the sequence is IEVVNVSHIF…YDPRFFTSKM (236 aa). 43–48 contributes to the ATP binding site; sequence GSGKST. Glu164 acts as the Proton acceptor in catalysis. Residues 220–266 form a required for heterodimer formation region; the sequence is GTRMEFLEKYDPRFFTSKMLVMRRLVLKGEDPFSMSDDELLERVCNS.

Belongs to the ABC transporter superfamily. Energy-coupling factor EcfA family. Forms a heterodimer with EcfA1. Forms a stable energy-coupling factor (ECF) transporter complex composed of 2 membrane-embedded substrate-binding proteins (S component, RibU, BioY), 2 ATP-binding proteins (A component) and 2 transmembrane proteins (T component) upon coexpression in E.coli. Stable subcomplexes with both A plus T components can also be isolated. This complex interacts with at least 2 substrate-specific components, BioY and RibU.

The protein localises to the cell inner membrane. Its function is as follows. ATP-binding (A) component of a common energy-coupling factor (ECF) ABC-transporter complex. Unlike classic ABC transporters this ECF transporter provides the energy necessary to transport a number of different substrates. Expression of the complex plus RibU in E.coli allows riboflavin uptake; uptake does not occur in the absence of RibU or the EcfA1A2T complex. The protein is Energy-coupling factor transporter ATP-binding protein EcfA2 (ecfA2) of Thermotoga maritima (strain ATCC 43589 / DSM 3109 / JCM 10099 / NBRC 100826 / MSB8).